We begin with the raw amino-acid sequence, 245 residues long: Ubiquinone/menaquinone biosynthesis C-methyltransferase UbiE (245 aa).

S-adenosyl-L-methionine is bound by residues Thr-71, Asp-92, and 118–119 (DA).

The protein belongs to the class I-like SAM-binding methyltransferase superfamily. MenG/UbiE family.

The catalysed reaction is a 2-demethylmenaquinol + S-adenosyl-L-methionine = a menaquinol + S-adenosyl-L-homocysteine + H(+). The enzyme catalyses a 2-methoxy-6-(all-trans-polyprenyl)benzene-1,4-diol + S-adenosyl-L-methionine = a 5-methoxy-2-methyl-3-(all-trans-polyprenyl)benzene-1,4-diol + S-adenosyl-L-homocysteine + H(+). The protein operates within quinol/quinone metabolism; menaquinone biosynthesis; menaquinol from 1,4-dihydroxy-2-naphthoate: step 2/2. Its pathway is cofactor biosynthesis; ubiquinone biosynthesis. In terms of biological role, methyltransferase required for the conversion of demethylmenaquinol (DMKH2) to menaquinol (MKH2) and the conversion of 2-polyprenyl-6-methoxy-1,4-benzoquinol (DDMQH2) to 2-polyprenyl-3-methyl-6-methoxy-1,4-benzoquinol (DMQH2). The polypeptide is Ubiquinone/menaquinone biosynthesis C-methyltransferase UbiE (Neisseria meningitidis serogroup C / serotype 2a (strain ATCC 700532 / DSM 15464 / FAM18)).